A 409-amino-acid chain; its full sequence is Ubiquitin-associated domain-containing protein 1 (409 aa).

N-acetylmethionine is present on M1. In terms of domain architecture, Ubiquitin-like spans 14 to 98 (LRLHICAADG…LLLIKKRAPS (85 aa)). The UBA 1 domain maps to 187 to 231 (DEDERVDETALRQLTEMGFPESRASKALRLNHMSVPQAMEWLIEH). A disordered region spans residues 235–273 (PAIDTPLPGHAAQAEASAAAATSSSSSEAAVGTSVEDEE). The span at 245-264 (AAQAEASAAAATSSSSSEAA) shows a compositional bias: low complexity. A UBA 2 domain is found at 292-332 (RADARAVISLMEMGFDEKEVIDALRVNNNQQNAACEWLLGD). An STI1 domain is found at 357–396 (NPVVQLGLTNPKTLLAFEDMLENPLNSTQWMNDPETGPVM).

As to quaternary structure, component of the KPC complex composed of RNF123/KPC1 and UBAC1/KPC2. Interacts (via ubiquitin-like domain) with RNF123. Interacts (via ubiquitin-like and UBA domains) with the proteasome via its N-terminal domain.

It is found in the cytoplasm. It functions in the pathway protein modification; protein ubiquitination. Its function is as follows. Non-catalytic component of the KPC complex, a E3 ubiquitin-protein ligase complex that mediates polyubiquitination of target proteins, such as CDKN1B and NFKB1. The KPC complex catalyzes polyubiquitination and proteasome-mediated degradation of CDKN1B during G1 phase of the cell cycle. The KPC complex also acts as a key regulator of the NF-kappa-B signaling by promoting maturation of the NFKB1 component of NF-kappa-B by catalyzing ubiquitination of the NFKB1 p105 precursor. Within the KPC complex, UBAC1 acts as an adapter that promotes the transfer of target proteins that have been polyubiquitinated by RNF123/KPC1 to the 26S proteasome. This is Ubiquitin-associated domain-containing protein 1 (Ubac1) from Rattus norvegicus (Rat).